Here is a 465-residue protein sequence, read N- to C-terminus: Serine carboxypeptidase-like 19 (465 aa).

The signal sequence occupies residues 1 to 23 (MRNLSFIVLFLLTLFFIHHLVDA). 77 to 79 (TGG) provides a ligand contact to substrate. 3 disulfide bridges follow: C82–C353, C246–C260, and C284–C320. N103 is a glycosylation site (N-linked (GlcNAc...) asparagine). 177–179 (DSY) is a substrate binding site. Residue S178 is part of the active site. Positions 292–317 (DTPNIRTDRRRVMKEFSVNDSSSLPP) are cleaved as a propeptide — linker peptide. 2 N-linked (GlcNAc...) asparagine glycosylation sites follow: N310 and N373. The active site involves D389. Residue N405 is glycosylated (N-linked (GlcNAc...) asparagine). 439 to 443 (KGGGH) is a substrate binding site. Residue H443 is part of the active site.

It belongs to the peptidase S10 family. In terms of assembly, heterodimer. N-glycosylated. In terms of tissue distribution, expressed in roots and flowers, and at lower levels in young leaves and seedlings. Expressed in mature seeds and detected in expanding siliques.

The protein resides in the secreted. The catalysed reaction is 1-O-(trans-sinapoyl)-beta-D-glucose + choline = O-sinapoylcholine + D-glucose. With respect to regulation, slightly inhibited by phenylmethylsulfonyl fluoride (PMSF). In terms of biological role, involved in plants secondary metabolism. Functions as acyltransferase to form the sinapate ester sinapoylcholine also known as sinapine. Able to convert in vitro benzoylglucose into benzoylcholine. The sequence is that of Serine carboxypeptidase-like 19 from Arabidopsis thaliana (Mouse-ear cress).